Consider the following 569-residue polypeptide: Glutamine--tRNA ligase (569 aa).

A disordered region spans residues 1 to 23 (MSKDPMSKPTPEPAAHSKAGPAV). The short motif at 50 to 60 (PEPNGYLHIGH) is the 'HIGH' region element. Residues 51–53 (EPN) and 57–63 (HIGHAKS) contribute to the ATP site. L-glutamine contacts are provided by Asp-83 and Tyr-228. ATP-binding positions include Thr-247 and 277 to 278 (RL). A 'KMSKS' region motif is present at residues 284–288 (ITSKR).

The protein belongs to the class-I aminoacyl-tRNA synthetase family. Monomer.

The protein resides in the cytoplasm. It catalyses the reaction tRNA(Gln) + L-glutamine + ATP = L-glutaminyl-tRNA(Gln) + AMP + diphosphate. The polypeptide is Glutamine--tRNA ligase (Pseudomonas syringae pv. tomato (strain ATCC BAA-871 / DC3000)).